Consider the following 82-residue polypeptide: ATP synthase subunit c (82 aa).

Transmembrane regions (helical) follow at residues 5–25 and 57–77; these read IASA…IGPG and LAFM…LLFA.

Belongs to the ATPase C chain family. As to quaternary structure, F-type ATPases have 2 components, F(1) - the catalytic core - and F(0) - the membrane proton channel. F(1) has five subunits: alpha(3), beta(3), gamma(1), delta(1), epsilon(1). F(0) has four main subunits: a(1), b(1), b'(1) and c(10-14). The alpha and beta chains form an alternating ring which encloses part of the gamma chain. F(1) is attached to F(0) by a central stalk formed by the gamma and epsilon chains, while a peripheral stalk is formed by the delta, b and b' chains.

The protein localises to the cellular thylakoid membrane. F(1)F(0) ATP synthase produces ATP from ADP in the presence of a proton or sodium gradient. F-type ATPases consist of two structural domains, F(1) containing the extramembraneous catalytic core and F(0) containing the membrane proton channel, linked together by a central stalk and a peripheral stalk. During catalysis, ATP synthesis in the catalytic domain of F(1) is coupled via a rotary mechanism of the central stalk subunits to proton translocation. Its function is as follows. Key component of the F(0) channel; it plays a direct role in translocation across the membrane. A homomeric c-ring of between 10-14 subunits forms the central stalk rotor element with the F(1) delta and epsilon subunits. The chain is ATP synthase subunit c from Cyanothece sp. (strain PCC 7425 / ATCC 29141).